The chain runs to 182 residues: A-type ATP synthase subunit E (182 aa).

Belongs to the V-ATPase E subunit family. As to quaternary structure, has multiple subunits with at least A(3), B(3), C, D, E, F, H, I and proteolipid K(x).

The protein resides in the cell membrane. Its function is as follows. Component of the A-type ATP synthase that produces ATP from ADP in the presence of a proton gradient across the membrane. This Picrophilus torridus (strain ATCC 700027 / DSM 9790 / JCM 10055 / NBRC 100828 / KAW 2/3) protein is A-type ATP synthase subunit E.